The sequence spans 281 residues: Cytosolic Fe-S cluster assembly factor CFD1 (281 aa).

An ATP-binding site is contributed by Gly24–Ser31. The [4Fe-4S] cluster site is built by Cys201 and Cys204.

The protein belongs to the Mrp/NBP35 ATP-binding proteins family. NUBP2/CFD1 subfamily. In terms of assembly, heterotetramer of 2 NBP35 and 2 CFD1 chains. The cofactor is [4Fe-4S] cluster.

The protein resides in the cytoplasm. Functionally, component of the cytosolic iron-sulfur (Fe/S) protein assembly (CIA) machinery. Required for maturation of extramitochondrial Fe-S proteins. The NBP35-CFD1 heterotetramer forms a Fe-S scaffold complex, mediating the de novo assembly of an Fe-S cluster and its transfer to target apoproteins. Required for biogenesis and export of both ribosomal subunits, which may reflect a role in assembly of the Fe/S clusters in RLI1, a protein which performs rRNA processing and ribosome export. The polypeptide is Cytosolic Fe-S cluster assembly factor CFD1 (Eremothecium gossypii (strain ATCC 10895 / CBS 109.51 / FGSC 9923 / NRRL Y-1056) (Yeast)).